Here is a 221-residue protein sequence, read N- to C-terminus: GDP-perosamine N-acetyltransferase (221 aa).

The Proton acceptor role is filled by histidine 139.

The protein belongs to the transferase hexapeptide repeat family. In terms of assembly, homotrimer.

The catalysed reaction is GDP-alpha-D-perosamine + acetyl-CoA = GDP-N-acetyl-alpha-D-perosamine + CoA + H(+). It participates in bacterial outer membrane biogenesis; LPS O-antigen biosynthesis. Catalyzes the transfer of an acetyl residue from acetyl-CoA onto GDP-perosamine to form GDP-N-acetyl-perosamine. The protein is GDP-perosamine N-acetyltransferase of Escherichia coli O157:H7.